The sequence spans 360 residues: DNA integrity scanning protein DisA (360 aa).

The DAC domain occupies 9–147 (DDEIIEVLRM…GSRKYILRET (139 aa)). Residues G76, L94, and 107–111 (TRHKT) each bind ATP.

The protein belongs to the DisA family. As to quaternary structure, homooctamer. Mg(2+) serves as cofactor.

The enzyme catalyses 2 ATP = 3',3'-c-di-AMP + 2 diphosphate. Participates in a DNA-damage check-point that is active prior to asymmetric division when DNA is damaged. DisA forms globular foci that rapidly scan along the chromosomes during sporulation, searching for lesions. When a lesion is present, DisA pauses at the lesion site. This triggers a cellular response that culminates in a temporary block in sporulation initiation. In terms of biological role, also has diadenylate cyclase activity, catalyzing the condensation of 2 ATP molecules into cyclic di-AMP (c-di-AMP). c-di-AMP acts as a signaling molecule that couples DNA integrity with progression of sporulation. The rise in c-di-AMP level generated by DisA while scanning the chromosome, operates as a positive signal that advances sporulation; upon encountering a lesion, the DisA focus arrests at the damaged site and halts c-di-AMP synthesis. The chain is DNA integrity scanning protein DisA from Acetivibrio thermocellus (strain ATCC 27405 / DSM 1237 / JCM 9322 / NBRC 103400 / NCIMB 10682 / NRRL B-4536 / VPI 7372) (Clostridium thermocellum).